The chain runs to 275 residues: Phosphatidylglycerol--prolipoprotein diacylglyceryl transferase (275 aa).

7 helical membrane passes run 22 to 42 (LSVR…MWLA), 61 to 81 (LLFY…VLFY), 96 to 116 (IWTG…AMIW), 125 to 145 (FFTV…VGRI), 177 to 197 (SQLY…NLFW), 204 to 224 (GAIS…VEFV), and 238 to 258 (ISMG…MVWA). Arg-144 lines the a 1,2-diacyl-sn-glycero-3-phospho-(1'-sn-glycerol) pocket.

Belongs to the Lgt family.

The protein localises to the cell inner membrane. The enzyme catalyses L-cysteinyl-[prolipoprotein] + a 1,2-diacyl-sn-glycero-3-phospho-(1'-sn-glycerol) = an S-1,2-diacyl-sn-glyceryl-L-cysteinyl-[prolipoprotein] + sn-glycerol 1-phosphate + H(+). Its pathway is protein modification; lipoprotein biosynthesis (diacylglyceryl transfer). Functionally, catalyzes the transfer of the diacylglyceryl group from phosphatidylglycerol to the sulfhydryl group of the N-terminal cysteine of a prolipoprotein, the first step in the formation of mature lipoproteins. This chain is Phosphatidylglycerol--prolipoprotein diacylglyceryl transferase, found in Aeromonas salmonicida (strain A449).